The chain runs to 396 residues: Phosphoglycerate kinase (396 aa).

Residues 21 to 23 (DFN), R36, 59 to 62 (HLGR), R118, and R151 contribute to the substrate site. ATP contacts are provided by residues K201, G292, E323, and 349–352 (GGDS).

The protein belongs to the phosphoglycerate kinase family. As to quaternary structure, monomer.

The protein resides in the cytoplasm. The enzyme catalyses (2R)-3-phosphoglycerate + ATP = (2R)-3-phospho-glyceroyl phosphate + ADP. It functions in the pathway carbohydrate degradation; glycolysis; pyruvate from D-glyceraldehyde 3-phosphate: step 2/5. This Leptospira borgpetersenii serovar Hardjo-bovis (strain L550) protein is Phosphoglycerate kinase.